The sequence spans 233 residues: UPF0502 protein Sden_2282 (233 aa).

The span at 178 to 198 (TQHQRPPQTPHLSSRTNVDNS) shows a compositional bias: polar residues. A disordered region spans residues 178–204 (TQHQRPPQTPHLSSRTNVDNSYESDER).

The protein belongs to the UPF0502 family.

In Shewanella denitrificans (strain OS217 / ATCC BAA-1090 / DSM 15013), this protein is UPF0502 protein Sden_2282.